A 402-amino-acid chain; its full sequence is Deoxyguanosinetriphosphate triphosphohydrolase-like protein 2 (402 aa).

Positions 72 to 215 (RLTHSLEVAQ…MDLADEIAYA (144 aa)) constitute an HD domain.

This sequence belongs to the dGTPase family. Type 2 subfamily.

The chain is Deoxyguanosinetriphosphate triphosphohydrolase-like protein 2 from Vibrio cholerae serotype O1 (strain ATCC 39315 / El Tor Inaba N16961).